Reading from the N-terminus, the 393-residue chain is Major outer membrane porin, serovar D (393 aa).

Positions Met-1–Ala-22 are cleaved as a signal peptide.

Belongs to the chlamydial porin (CP) (TC 1.B.2) family. As to quaternary structure, part of a disulfide cross-linked outer membrane complex (COMC) composed of the major outer membrane porin (MOMP), the small cysteine-rich protein (OmcA) and the large cysteine-rich periplasmic protein (OmcB).

It localises to the cell outer membrane. Functionally, in elementary bodies (EBs, the infectious stage, which is able to survive outside the host cell) provides the structural integrity of the outer envelope through disulfide cross-links with the small cysteine-rich protein and the large cysteine-rich periplasmic protein. It has been described in publications as the Sarkosyl-insoluble COMC (Chlamydia outer membrane complex), and serves as the functional equivalent of peptidoglycan. Its function is as follows. Permits diffusion of specific solutes through the outer membrane. The chain is Major outer membrane porin, serovar D (ompA) from Chlamydia trachomatis serovar D (strain ATCC VR-885 / DSM 19411 / UW-3/Cx).